We begin with the raw amino-acid sequence, 359 residues long: DNA replication and repair protein RecF (359 aa).

30–37 contributes to the ATP binding site; it reads GPNAKGKT.

The protein belongs to the RecF family.

It is found in the cytoplasm. Its function is as follows. The RecF protein is involved in DNA metabolism; it is required for DNA replication and normal SOS inducibility. RecF binds preferentially to single-stranded, linear DNA. It also seems to bind ATP. This chain is DNA replication and repair protein RecF, found in Protochlamydia amoebophila (strain UWE25).